A 349-amino-acid chain; its full sequence is Green-sensitive opsin-4 (349 aa).

Over 1 to 36 (MNGTEGNNFYIPLSNRTGLARSPYEYPQYYLAEPWQ) the chain is Extracellular. N-linked (GlcNAc...) asparagine glycosylation is found at Asn-2 and Asn-15. The helical transmembrane segment at 37-61 (FKLLAVYMFFLICLGFPINGLTLLV) threads the bilayer. At 62 to 73 (TAQHKKLRQPLN) the chain is on the cytoplasmic side. Residues 74–99 (FILVNLAVAGTIMVCFGFTVTFYTAI) form a helical membrane-spanning segment. The Extracellular portion of the chain corresponds to 100–113 (NGYFVLGPTGCAIE). The cysteines at positions 110 and 187 are disulfide-linked. Residues 114–133 (GFMATLGGEVALWSLVVLAV) form a helical membrane-spanning segment. Over 134 to 152 (ERYIVVCKPMGSFKFSASH) the chain is Cytoplasmic. The helical transmembrane segment at 153–176 (AFAGCAFTWVMAMACAAPPLVGWS) threads the bilayer. The Extracellular segment spans residues 177–202 (RYIPEGMQCSCGPDYYTLNPEYNNES). An N-linked (GlcNAc...) asparagine glycan is attached at Asn-200. Residues 203–230 (YVLYMFICHFILPVTIIFFTYGRLVCTV) traverse the membrane as a helical segment. At 231 to 252 (KAAAAQQQESESTQKAEREVTR) the chain is on the cytoplasmic side. The chain crosses the membrane as a helical span at residues 253–276 (MVILMVLGFLIAWTPYATVAAWIF). At 277–284 (FNKGAAFS) the chain is on the extracellular side. The chain crosses the membrane as a helical span at residues 285-309 (AQFMAVPAFFSKTSALYNPVIYVLL). N6-(retinylidene)lysine is present on Lys-296. The Cytoplasmic segment spans residues 310–349 (NKQFRNCMLTTLFCGKNPLGDDESSTVSTSKTEVSSVSPA). Residues 329-349 (GDDESSTVSTSKTEVSSVSPA) form a disordered region. A compositionally biased stretch (low complexity) spans 334 to 349 (STVSTSKTEVSSVSPA).

It belongs to the G-protein coupled receptor 1 family. Opsin subfamily. Post-translationally, phosphorylated on some or all of the serine and threonine residues present in the C-terminal region. As to expression, retinal double cone accessory photoreceptor cell outer segments.

The protein localises to the membrane. Visual pigments are the light-absorbing molecules that mediate vision. They consist of an apoprotein, opsin, covalently linked to cis-retinal. This chain is Green-sensitive opsin-4 (opn1mw4), found in Danio rerio (Zebrafish).